Reading from the N-terminus, the 225-residue chain is Probable septum site-determining protein MinC (225 aa).

It belongs to the MinC family. As to quaternary structure, interacts with MinD and FtsZ.

Cell division inhibitor that blocks the formation of polar Z ring septums. Rapidly oscillates between the poles of the cell to destabilize FtsZ filaments that have formed before they mature into polar Z rings. Prevents FtsZ polymerization. The chain is Probable septum site-determining protein MinC from Listeria monocytogenes serotype 4a (strain HCC23).